Here is a 615-residue protein sequence, read N- to C-terminus: Protein DBF4 homolog B (615 aa).

The 91-residue stretch at 43-133 (ARKHPFSGKS…DPKGSHPRPS (91 aa)) folds into the BRCT domain. Disordered stretches follow at residues 93–141 (REVK…DSVP) and 264–293 (FEAP…AHTM). Positions 275-284 (HTRESKDGEP) are enriched in basic and acidic residues. The DBF4-type zinc finger occupies 294-343 (PRRKKGYCECCQEAFEELHVHLQSAQHRSFALEAHLYAEVDRIIAQLSHS). Residues cysteine 301, cysteine 304, histidine 314, and histidine 320 each contribute to the Zn(2+) site. Residues 371-407 (TLHPHQPSHPRAASPRIRKEDSCQASVTQGRAAGQQR) form a disordered region.

Forms a complex with CDC7. Note that CDC7 forms distinct complex either with DBF4/DBF4A or DBF4B. Such complexes are stable upon replication stress. In terms of processing, phosphorylated. In terms of tissue distribution, widely expressed. Highly expressed in testis.

Its subcellular location is the nucleus. Its function is as follows. Regulatory subunit for CDC7 which activates its kinase activity thereby playing a central role in DNA replication and cell proliferation. Required for progression of S and M phases. The complex CDC7-DBF4B selectively phosphorylates MCM2 subunit at 'Ser-40' and then is involved in regulating the initiation of DNA replication during cell cycle. The sequence is that of Protein DBF4 homolog B (DBF4B) from Homo sapiens (Human).